The primary structure comprises 267 residues: L-aspartate dehydrogenase 2 (267 aa).

NAD(+) is bound by residues A123 and N189. The active site involves H219.

It belongs to the L-aspartate dehydrogenase family.

The catalysed reaction is L-aspartate + NADP(+) + H2O = oxaloacetate + NH4(+) + NADPH + H(+). It carries out the reaction L-aspartate + NAD(+) + H2O = oxaloacetate + NH4(+) + NADH + H(+). The protein operates within cofactor biosynthesis; NAD(+) biosynthesis; iminoaspartate from L-aspartate (dehydrogenase route): step 1/1. Specifically catalyzes the NAD or NADP-dependent dehydrogenation of L-aspartate to iminoaspartate. This Bordetella pertussis (strain Tohama I / ATCC BAA-589 / NCTC 13251) protein is L-aspartate dehydrogenase 2.